We begin with the raw amino-acid sequence, 507 residues long: MITLTPGHLTLPQLRQIARESVQLTLDPASFAKIDAGAKAVADIAAKGEPAYGINTGFGRLASTHIPHDQLELLQKNLVLSHAVGVGEPMARSSVRLLMALKLSSLGRGHSGIRREVMDALIKLFNADVLPLIPVKGSVGASGDLAPLAHMSAVLLGVGEVFIRGERASALDGLRVAGLAPLTLQAKEGLALLNGTQASTALALDNMFSIEDLYRTALVAGALSVDAAAGSVKPFDARIHELRGHQGQIDAAASYRDLLAGSPINQSHLDCDKVQDPYSLRCQPQVMGACLDQMRHAADVLLVEANAVSDNPLIFPDTGEVLSGGNFHAEPVAFAADNLALAASEIGALAERRIALLIDATLSGLPPFLVRDGGVNSGFMIAHVTAAALASENKTLAHPASVDSLPTSANQEDHVSMATFAARKLADIADNTKHILAIELLAAAQGVDLRAPYHTSPKLAPVMETIRGKVAHYELDHYFAPDIAVIAKLVGERAFAKVAPFSFASEQ.

Residues 141 to 143 (ASG) constitute a cross-link (5-imidazolinone (Ala-Gly)). 2,3-didehydroalanine (Ser) is present on Ser-142.

It belongs to the PAL/histidase family. In terms of processing, contains an active site 4-methylidene-imidazol-5-one (MIO), which is formed autocatalytically by cyclization and dehydration of residues Ala-Ser-Gly.

Its subcellular location is the cytoplasm. It catalyses the reaction L-histidine = trans-urocanate + NH4(+). The protein operates within amino-acid degradation; L-histidine degradation into L-glutamate; N-formimidoyl-L-glutamate from L-histidine: step 1/3. This chain is Histidine ammonia-lyase, found in Burkholderia lata (strain ATCC 17760 / DSM 23089 / LMG 22485 / NCIMB 9086 / R18194 / 383).